The primary structure comprises 362 residues: MENQVLTPHVYWAQRHRELYLRVELSDVQNPAISITENVLHFKAQGHGAKGDNVYEFHLEFLDLVKPEPVYKLTQRQVNITVQKKVSQWWERLTKQEKRPLFLAPDFDRWLDESDAEMELRAKEEERLNKLRLESEGSPETLTNLRKGYLFMYNLVQFLGFSWIFVNLTVRFCILGKESFYDTFHTVADMMYFCQMLAVVETINAAIGVTTSPVLPSLIQLLGRNFILFIIFGTMEEMQNKAVVFFVFYLWSAIEIFRYSFYMLTCIDMDWKVLTWLRYTLWIPLYPLGCLAEAVSVIQSIPIFNETGRFSFTLPYPVKIKVRFSFFLQIYLIMIFLGLYINFRHLYKQRRRRYGQKKKKIH.

An N-acetylmethionine modification is found at methionine 1. Residues 1 to 149 (MENQVLTPHV…ETLTNLRKGY (149 aa)) are Cytoplasmic-facing. A CS domain is found at 5-94 (VLTPHVYWAQ…KVSQWWERLT (90 aa)). Threonine 7 is subject to Phosphothreonine. Positions 111–136 (LDESDAEMELRAKEEERLNKLRLESE) form a coiled coil. A phosphoserine mark is found at serine 114 and serine 135. A helical membrane pass occupies residues 150-170 (LFMYNLVQFLGFSWIFVNLTV). Topologically, residues 171–185 (RFCILGKESFYDTFH) are lumenal. A helical membrane pass occupies residues 186-207 (TVADMMYFCQMLAVVETINAAI). Residues 208-217 (GVTTSPVLPS) are Cytoplasmic-facing. The chain crosses the membrane as a helical span at residues 218 to 235 (LIQLLGRNFILFIIFGTM). At 236 to 241 (EEMQNK) the chain is on the lumenal side. A helical membrane pass occupies residues 242-256 (AVVFFVFYLWSAIEI). Over 257 to 279 (FRYSFYMLTCIDMDWKVLTWLRY) the chain is Cytoplasmic. The chain crosses the membrane as a helical span at residues 280–298 (TLWIPLYPLGCLAEAVSVI). Active-site residues include tyrosine 286 and glutamate 293. At 299-322 (QSIPIFNETGRFSFTLPYPVKIKV) the chain is on the lumenal side. The chain crosses the membrane as a helical span at residues 323 to 343 (RFSFFLQIYLIMIFLGLYINF). Residues 344-362 (RHLYKQRRRRYGQKKKKIH) lie on the Cytoplasmic side of the membrane.

The protein belongs to the very long-chain fatty acids dehydratase HACD family. As to quaternary structure, may interact with enzymes of the ELO family (including ELOVL1); with those enzymes that mediate condensation, the first of the four steps of the reaction cycle responsible for fatty acids elongation, may be part of a larger fatty acids elongase complex. Interacts with RAC1. Associates with internalized insulin receptor/INSR complexes on Golgi/endosomal membranes; HACD3/PTPLAD1 together with ATIC and PRKAA2/AMPK2 is proposed to be part of a signaling network regulating INSR autophosphorylation and endocytosis. In terms of tissue distribution, highly expressed in testis, kidney, brain, liver and weakly in skeletal muscle, spleen and heart. No expression detected in leukocytes.

It localises to the endoplasmic reticulum membrane. It carries out the reaction a very-long-chain (3R)-3-hydroxyacyl-CoA = a very-long-chain (2E)-enoyl-CoA + H2O. It catalyses the reaction (3R)-hydroxyhexadecanoyl-CoA = (2E)-hexadecenoyl-CoA + H2O. It participates in lipid metabolism; fatty acid biosynthesis. Functionally, catalyzes the third of the four reactions of the long-chain fatty acids elongation cycle. This endoplasmic reticulum-bound enzymatic process, allows the addition of two carbons to the chain of long- and very long-chain fatty acids/VLCFAs per cycle. This enzyme catalyzes the dehydration of the 3-hydroxyacyl-CoA intermediate into trans-2,3-enoyl-CoA, within each cycle of fatty acid elongation. Thereby, it participates in the production of VLCFAs of different chain lengths that are involved in multiple biological processes as precursors of membrane lipids and lipid mediators. May be involved in Rac1-signaling pathways leading to the modulation of gene expression. Promotes insulin receptor/INSR autophosphorylation and is involved in INSR internalization. This chain is Very-long-chain (3R)-3-hydroxyacyl-CoA dehydratase 3, found in Homo sapiens (Human).